A 6907-amino-acid chain; its full sequence is Fibrous sheath-interacting protein 2 (6907 aa).

The segment at 273–292 (EERIEEQQHRNREESDRKKQ) is disordered. Phosphoserine is present on S430. 8 disordered regions span residues 439 to 472 (SQAF…ESGP), 954 to 990 (FQKS…RPFP), 1545 to 1573 (VQED…TKEM), 3202 to 3257 (VSSD…FDQT), 5650 to 5672 (RTSS…EHHS), 5725 to 5781 (SAQS…KPGI), 5850 to 5880 (DKGN…EAPS), and 6852 to 6874 (GSAN…KQGS). Basic and acidic residues predominate over residues 445–460 (PSKEEKETNADWDGRP). The segment covering 954 to 966 (FQKSRQPRISSPS) has biased composition (polar residues). 2 stretches are compositionally biased toward basic and acidic residues: residues 1545–1555 (VQEDNKEETKS) and 3213–3229 (SVED…RPDS). Low complexity predominate over residues 5728–5741 (SVTTKKVSSSTNKN). The stretch at 5738-5766 (TNKNISAKEKEEEEREKEKVREEIKSEPS) forms a coiled coil. Positions 5743 to 5778 (SAKEKEEEEREKEKVREEIKSEPSKPDDPQNQRESK) are enriched in basic and acidic residues.

May interact with AKAP4. As to expression, predominantly expressed in testis.

Functionally, plays a role in spermatogenesis. The polypeptide is Fibrous sheath-interacting protein 2 (FSIP2) (Homo sapiens (Human)).